A 559-amino-acid chain; its full sequence is 5'-AMP-activated protein kinase catalytic subunit alpha-1 (559 aa).

The Protein kinase domain occupies 27 to 279; it reads YILGDTLGVG…IKDIREHEWF (253 aa). Threonine 32 bears the Phosphothreonine mark. Residues 33 to 41 and lysine 56 each bind ATP; that span reads LGVGTFGKV. Aspartate 150 (proton acceptor) is an active-site residue. At threonine 183 the chain carries Phosphothreonine; by LKB1 and CaMKK2. Residues threonine 269 and threonine 355 each carry the phosphothreonine modification. The segment at 302–381 is AIS; that stretch reads EALKEVCEKF…PERVPFLVAE (80 aa). Serine 356 is subject to Phosphoserine. Residue serine 360 is modified to Phosphoserine; by ULK1. At threonine 368 the chain carries Phosphothreonine; by ULK1. Threonine 382 is modified (phosphothreonine). Phosphoserine; by ULK1 is present on serine 397. Phosphoserine occurs at positions 467 and 486. Positions 484-536 are disordered; it reads AKSGTATPQRSGSISNYRSCQRSDSDAEAQGKPSEVSLTSSVTSLDSSPVDVA. The span at 485-505 shows a compositional bias: polar residues; it reads KSGTATPQRSGSISNYRSCQR. Serine 486 is modified (phosphoserine; by ULK1). Threonine 488 carries the phosphothreonine; by ULK1 modification. At threonine 490 the chain carries Phosphothreonine. A phosphoserine mark is found at serine 496, serine 508, serine 524, and serine 527. Over residues 516 to 535 the composition is skewed to low complexity; the sequence is PSEVSLTSSVTSLDSSPVDV.

Belongs to the protein kinase superfamily. CAMK Ser/Thr protein kinase family. SNF1 subfamily. As to quaternary structure, AMPK is a heterotrimer of an alpha catalytic subunit (PRKAA1 or PRKAA2), a beta (PRKAB1 or PRKAB2) and a gamma non-catalytic subunits (PRKAG1, PRKAG2 or PRKAG3). Interacts with FNIP1 and FNIP2. Requires Mg(2+) as cofactor. Post-translationally, ubiquitinated. In terms of processing, phosphorylated at Thr-183 by STK11/LKB1 in complex with STE20-related adapter-alpha (STRADA) pseudo kinase and CAB39. Also phosphorylated at Thr-183 by CAMKK2; triggered by a rise in intracellular calcium ions, without detectable changes in the AMP/ATP ratio. CAMKK1 can also phosphorylate Thr-183, but at a much lower level. Dephosphorylated by protein phosphatase 2A and 2C (PP2A and PP2C). Phosphorylated by ULK1 and ULK2; leading to negatively regulate AMPK activity and suggesting the existence of a regulatory feedback loop between ULK1, ULK2 and AMPK. There is some ambiguity for some phosphosites: Ser-360/Thr-368 and Ser-486/Thr-488. Dephosphorylated by PPM1A and PPM1B. Glycosylated; O-GlcNAcylated by OGT, promoting the AMP-activated protein kinase (AMPK) activity. Low expression in kidney, liver, lung, heart and brain.

It localises to the cytoplasm. It is found in the nucleus. It catalyses the reaction L-seryl-[protein] + ATP = O-phospho-L-seryl-[protein] + ADP + H(+). It carries out the reaction L-threonyl-[protein] + ATP = O-phospho-L-threonyl-[protein] + ADP + H(+). The catalysed reaction is L-seryl-[acetyl-CoA carboxylase] + ATP = O-phospho-L-seryl-[acetyl-CoA carboxylase] + ADP + H(+). The enzyme catalyses L-seryl-[3-hydroxy-3-methylglutaryl-coenzyme A reductase] + ATP = O-phospho-L-seryl-[3-hydroxy-3-methylglutaryl-coenzyme A reductase] + ADP + H(+). It catalyses the reaction L-seryl-[tau protein] + ATP = O-phospho-L-seryl-[tau protein] + ADP + H(+). It carries out the reaction L-threonyl-[tau protein] + ATP = O-phospho-L-threonyl-[tau protein] + ADP + H(+). Its activity is regulated as follows. Activated by phosphorylation on Thr-183. Binding of AMP to non-catalytic gamma subunit (PRKAG1, PRKAG2 or PRKAG3) results in allosteric activation, inducing phosphorylation on Thr-183. AMP-binding to gamma subunit also sustains activity by preventing dephosphorylation of Thr-183. ADP also stimulates Thr-183 phosphorylation, without stimulating already phosphorylated AMPK. ATP promotes dephosphorylation of Thr-183, rendering the enzyme inactive. Under physiological conditions AMPK mainly exists in its inactive form in complex with ATP, which is much more abundant than AMP. Selectively inhibited by compound C (6-[4-(2-Piperidin-1-yl-ethoxy)-phenyl)]-3-pyridin-4-yl-pyyrazolo[1,5-a] pyrimidine. Activated by resveratrol, a natural polyphenol present in red wine, and S17834, a synthetic polyphenol. Functionally, catalytic subunit of AMP-activated protein kinase (AMPK), an energy sensor protein kinase that plays a key role in regulating cellular energy metabolism. In response to reduction of intracellular ATP levels, AMPK activates energy-producing pathways and inhibits energy-consuming processes: inhibits protein, carbohydrate and lipid biosynthesis, as well as cell growth and proliferation. AMPK acts via direct phosphorylation of metabolic enzymes, and by longer-term effects via phosphorylation of transcription regulators. Regulates lipid synthesis by phosphorylating and inactivating lipid metabolic enzymes such as ACACA, ACACB, GYS1, HMGCR and LIPE; regulates fatty acid and cholesterol synthesis by phosphorylating acetyl-CoA carboxylase (ACACA and ACACB) and hormone-sensitive lipase (LIPE) enzymes, respectively. Promotes lipolysis of lipid droplets by mediating phosphorylation of isoform 1 of CHKA (CHKalpha2). Regulates insulin-signaling and glycolysis by phosphorylating IRS1, PFKFB2 and PFKFB3. AMPK stimulates glucose uptake in muscle by increasing the translocation of the glucose transporter SLC2A4/GLUT4 to the plasma membrane, possibly by mediating phosphorylation of TBC1D4/AS160. Regulates transcription and chromatin structure by phosphorylating transcription regulators involved in energy metabolism such as CRTC2/TORC2, FOXO3, histone H2B, HDAC5, MEF2C, MLXIPL/ChREBP, EP300, HNF4A, p53/TP53, SREBF1, SREBF2 and PPARGC1A. Acts as a key regulator of glucose homeostasis in liver by phosphorylating CRTC2/TORC2, leading to CRTC2/TORC2 sequestration in the cytoplasm. In response to stress, phosphorylates 'Ser-36' of histone H2B (H2BS36ph), leading to promote transcription. Acts as a key regulator of cell growth and proliferation by phosphorylating FNIP1, TSC2, RPTOR, WDR24 and ATG1/ULK1: in response to nutrient limitation, negatively regulates the mTORC1 complex by phosphorylating RPTOR component of the mTORC1 complex and by phosphorylating and activating TSC2. Also phosphorylates and inhibits GATOR2 subunit WDR24 in response to nutrient limitation, leading to suppress glucose-mediated mTORC1 activation. In response to energetic stress, phosphorylates FNIP1, inactivating the non-canonical mTORC1 signaling, thereby promoting nuclear translocation of TFEB and TFE3, and inducing transcription of lysosomal or autophagy genes. In response to nutrient limitation, promotes autophagy by phosphorylating and activating ATG1/ULK1. In that process, it also activates WDR45/WIPI4. Phosphorylates CASP6, thereby preventing its autoprocessing and subsequent activation. In response to nutrient limitation, phosphorylates transcription factor FOXO3 promoting FOXO3 mitochondrial import. Also acts as a regulator of cellular polarity by remodeling the actin cytoskeleton; probably by indirectly activating myosin. AMPK also acts as a regulator of circadian rhythm by mediating phosphorylation of CRY1, leading to destabilize it. May regulate the Wnt signaling pathway by phosphorylating CTNNB1, leading to stabilize it. Also has tau-protein kinase activity: in response to amyloid beta A4 protein (APP) exposure, activated by CAMKK2, leading to phosphorylation of MAPT/TAU; however the relevance of such data remains unclear in vivo. Also phosphorylates CFTR, EEF2K, KLC1, NOS3 and SLC12A1. Regulates hepatic lipogenesis. Activated via SIRT3, represses sterol regulatory element-binding protein (SREBP) transcriptional activities and ATP-consuming lipogenesis to restore cellular energy balance. Upon stress, regulates mitochondrial fragmentation through phosphorylation of MTFR1L. The protein is 5'-AMP-activated protein kinase catalytic subunit alpha-1 (Prkaa1) of Rattus norvegicus (Rat).